Reading from the N-terminus, the 440-residue chain is Ribosomal protein uS12 methylthiotransferase RimO (440 aa).

Residues 8–125 (LRCHAISLGC…WNEQILLALN (118 aa)) enclose the MTTase N-terminal domain. [4Fe-4S] cluster-binding residues include Cys17, Cys52, Cys87, Cys152, Cys156, and Cys159. The Radical SAM core domain maps to 138–368 (TTGKSYAWLK…MEIQLKISEK (231 aa)). The TRAM domain occupies 371-439 (KNFVGKRLSL…SYDLVALADS (69 aa)).

This sequence belongs to the methylthiotransferase family. RimO subfamily. [4Fe-4S] cluster is required as a cofactor.

It is found in the cytoplasm. The catalysed reaction is L-aspartate(89)-[ribosomal protein uS12]-hydrogen + (sulfur carrier)-SH + AH2 + 2 S-adenosyl-L-methionine = 3-methylsulfanyl-L-aspartate(89)-[ribosomal protein uS12]-hydrogen + (sulfur carrier)-H + 5'-deoxyadenosine + L-methionine + A + S-adenosyl-L-homocysteine + 2 H(+). In terms of biological role, catalyzes the methylthiolation of an aspartic acid residue of ribosomal protein uS12. This Lawsonia intracellularis (strain PHE/MN1-00) protein is Ribosomal protein uS12 methylthiotransferase RimO.